A 130-amino-acid chain; its full sequence is Small ribosomal subunit protein uS9 (130 aa).

Residues 105 to 130 form a disordered region; the sequence is TRDPRMKERKKYGLHKARKAPQYSKR. Positions 111–130 are enriched in basic residues; that stretch reads KERKKYGLHKARKAPQYSKR.

This sequence belongs to the universal ribosomal protein uS9 family.

In Syntrophomonas wolfei subsp. wolfei (strain DSM 2245B / Goettingen), this protein is Small ribosomal subunit protein uS9.